The following is a 226-amino-acid chain: ATP synthase F(0) complex subunit a (226 aa).

A run of 6 helical transmembrane segments spans residues 6–26, 68–88, 97–117, 138–158, 164–184, and 193–213; these read FATFITPTILGITTLPIIMLF, WALMLMSLILFIASTNLLGLL, QLSMNIGMAIPLWLATVLMGF, VPMLIIIETISLFIQPVALAV, ITAGHLLIHLIGSATLALCSI, and FIILFLLTILELAVAMIQAYV.

Belongs to the ATPase A chain family. Component of the ATP synthase complex composed at least of ATP5F1A/subunit alpha, ATP5F1B/subunit beta, ATP5MC1/subunit c (homooctomer), MT-ATP6/subunit a, MT-ATP8/subunit 8, ATP5ME/subunit e, ATP5MF/subunit f, ATP5MG/subunit g, ATP5MK/subunit k, ATP5MJ/subunit j, ATP5F1C/subunit gamma, ATP5F1D/subunit delta, ATP5F1E/subunit epsilon, ATP5PF/subunit F6, ATP5PB/subunit b, ATP5PD/subunit d, ATP5PO/subunit OSCP. ATP synthase complex consists of a soluble F(1) head domain (subunits alpha(3) and beta(3)) - the catalytic core - and a membrane F(0) domain - the membrane proton channel (subunits c, a, 8, e, f, g, k and j). These two domains are linked by a central stalk (subunits gamma, delta, and epsilon) rotating inside the F1 region and a stationary peripheral stalk (subunits F6, b, d, and OSCP). Interacts with DNAJC30; interaction is direct.

Its subcellular location is the mitochondrion inner membrane. It carries out the reaction H(+)(in) = H(+)(out). In terms of biological role, subunit a, of the mitochondrial membrane ATP synthase complex (F(1)F(0) ATP synthase or Complex V) that produces ATP from ADP in the presence of a proton gradient across the membrane which is generated by electron transport complexes of the respiratory chain. ATP synthase complex consist of a soluble F(1) head domain - the catalytic core - and a membrane F(1) domain - the membrane proton channel. These two domains are linked by a central stalk rotating inside the F(1) region and a stationary peripheral stalk. During catalysis, ATP synthesis in the catalytic domain of F(1) is coupled via a rotary mechanism of the central stalk subunits to proton translocation. With the subunit c (ATP5MC1), forms the proton-conducting channel in the F(0) domain, that contains two crucial half-channels (inlet and outlet) that facilitate proton movement from the mitochondrial intermembrane space (IMS) into the matrix. Protons are taken up via the inlet half-channel and released through the outlet half-channel, following a Grotthuss mechanism. In Osphranter robustus (Wallaroo), this protein is ATP synthase F(0) complex subunit a.